The following is a 619-amino-acid chain: Dihydroxy-acid dehydratase (619 aa).

Asp81 serves as a coordination point for Mg(2+). Cys122 is a binding site for [2Fe-2S] cluster. Asp123 and Lys124 together coordinate Mg(2+). Lys124 is modified (N6-carboxylysine). Cys195 contributes to the [2Fe-2S] cluster binding site. Residue Glu492 coordinates Mg(2+). The active-site Proton acceptor is Ser518.

It belongs to the IlvD/Edd family. Homodimer. [2Fe-2S] cluster serves as cofactor. The cofactor is Mg(2+).

It carries out the reaction (2R)-2,3-dihydroxy-3-methylbutanoate = 3-methyl-2-oxobutanoate + H2O. It catalyses the reaction (2R,3R)-2,3-dihydroxy-3-methylpentanoate = (S)-3-methyl-2-oxopentanoate + H2O. It participates in amino-acid biosynthesis; L-isoleucine biosynthesis; L-isoleucine from 2-oxobutanoate: step 3/4. Its pathway is amino-acid biosynthesis; L-valine biosynthesis; L-valine from pyruvate: step 3/4. Functions in the biosynthesis of branched-chain amino acids. Catalyzes the dehydration of (2R,3R)-2,3-dihydroxy-3-methylpentanoate (2,3-dihydroxy-3-methylvalerate) into 2-oxo-3-methylpentanoate (2-oxo-3-methylvalerate) and of (2R)-2,3-dihydroxy-3-methylbutanoate (2,3-dihydroxyisovalerate) into 2-oxo-3-methylbutanoate (2-oxoisovalerate), the penultimate precursor to L-isoleucine and L-valine, respectively. The sequence is that of Dihydroxy-acid dehydratase from Synechococcus elongatus (strain ATCC 33912 / PCC 7942 / FACHB-805) (Anacystis nidulans R2).